The chain runs to 460 residues: 3-isopropylmalate dehydratase large subunit (460 aa).

Residues Cys-338, Cys-398, and Cys-401 each coordinate [4Fe-4S] cluster.

Belongs to the aconitase/IPM isomerase family. LeuC type 1 subfamily. As to quaternary structure, heterodimer of LeuC and LeuD. The cofactor is [4Fe-4S] cluster.

It carries out the reaction (2R,3S)-3-isopropylmalate = (2S)-2-isopropylmalate. It participates in amino-acid biosynthesis; L-leucine biosynthesis; L-leucine from 3-methyl-2-oxobutanoate: step 2/4. Its function is as follows. Catalyzes the isomerization between 2-isopropylmalate and 3-isopropylmalate, via the formation of 2-isopropylmaleate. The polypeptide is 3-isopropylmalate dehydratase large subunit (Streptococcus thermophilus (strain ATCC BAA-250 / LMG 18311)).